The sequence spans 404 residues: Phosphoglycerate kinase (404 aa).

Substrate is bound by residues 26-28 (DFN), Arg41, 64-67 (HLGR), Arg124, and Arg161. Residues Lys212, Gly301, Glu332, and 359-362 (GGDS) each bind ATP.

This sequence belongs to the phosphoglycerate kinase family. As to quaternary structure, monomer.

The protein localises to the cytoplasm. The catalysed reaction is (2R)-3-phosphoglycerate + ATP = (2R)-3-phospho-glyceroyl phosphate + ADP. The protein operates within carbohydrate degradation; glycolysis; pyruvate from D-glyceraldehyde 3-phosphate: step 2/5. The chain is Phosphoglycerate kinase from Mesomycoplasma hyopneumoniae (strain 232) (Mycoplasma hyopneumoniae).